A 224-amino-acid chain; its full sequence is Heme response regulator HssR (224 aa).

The Response regulatory domain maps to Lys-3 to Leu-116. Asp-52 is modified (4-aspartylphosphate). A DNA-binding region (ompR/PhoB-type) is located at residues Gln-124–Thr-222.

Phosphorylated by HssS.

It localises to the cytoplasm. Functionally, member of the two-component regulatory system HssS/HssR involved in intracellular heme homeostasis and tempering of staphylococcal virulence. Phosphorylated HssR binds to a direct repeat sequence within hrtAB promoter and activates the expression of hrtAB, an efflux pump, in response to extracellular heme, hemin, hemoglobin or blood. This Staphylococcus haemolyticus (strain JCSC1435) protein is Heme response regulator HssR (hssR).